The primary structure comprises 302 residues: FeMo cofactor biosynthesis protein NifB (302 aa).

The Radical SAM core domain maps to His22 to Arg264. Positions 36, 40, and 43 each coordinate [4Fe-4S] cluster. 3 residues coordinate S-adenosyl-L-methionine: Gly91, Thr142, and Ile194. Cys260 and Cys263 together coordinate [4Fe-4S] cluster.

The protein belongs to the radical SAM superfamily. NifB family. Monomer. [4Fe-4S] cluster is required as a cofactor.

Its pathway is cofactor biosynthesis; Fe-Mo cofactor biosynthesis. Functionally, involved in the biosynthesis of the iron-molybdenum cofactor (FeMo-co or M-cluster) found in the dinitrogenase enzyme of the nitrogenase complex in nitrogen-fixing microorganisms. NifB catalyzes the crucial step of radical SAM-dependent carbide insertion that occurs concomitant with the insertion of a 9th sulfur and the rearrangement/coupling of two [4Fe-4S] clusters into a [8Fe-9S-C] cluster, the precursor to the M-cluster. The chain is FeMo cofactor biosynthesis protein NifB from Methanocaldococcus infernus (strain DSM 11812 / JCM 15783 / ME).